The primary structure comprises 609 residues: Glutamine--fructose-6-phosphate aminotransferase [isomerizing] (609 aa).

The active-site Nucleophile; for GATase activity is Cys2. The region spanning 2–219 (CGIFGYLGSK…SGELAIVGLG (218 aa)) is the Glutamine amidotransferase type-2 domain. SIS domains follow at residues 280–426 (ISEK…SKHT) and 458–599 (WAHT…IDCP). The For Fru-6P isomerization activity role is filled by Lys604.

In terms of assembly, homodimer.

Its subcellular location is the cytoplasm. The catalysed reaction is D-fructose 6-phosphate + L-glutamine = D-glucosamine 6-phosphate + L-glutamate. Functionally, catalyzes the first step in hexosamine metabolism, converting fructose-6P into glucosamine-6P using glutamine as a nitrogen source. In Chlamydia abortus (strain DSM 27085 / S26/3) (Chlamydophila abortus), this protein is Glutamine--fructose-6-phosphate aminotransferase [isomerizing].